Reading from the N-terminus, the 358-residue chain is Aminomethyltransferase (358 aa).

The protein belongs to the GcvT family. The glycine cleavage system is composed of four proteins: P, T, L and H.

It catalyses the reaction N(6)-[(R)-S(8)-aminomethyldihydrolipoyl]-L-lysyl-[protein] + (6S)-5,6,7,8-tetrahydrofolate = N(6)-[(R)-dihydrolipoyl]-L-lysyl-[protein] + (6R)-5,10-methylene-5,6,7,8-tetrahydrofolate + NH4(+). Its function is as follows. The glycine cleavage system catalyzes the degradation of glycine. The sequence is that of Aminomethyltransferase from Francisella tularensis subsp. tularensis (strain WY96-3418).